The following is a 485-amino-acid chain: Transcription factor ETV6 (485 aa).

Polar residues predominate over residues 1–10 (MSETPAQSSI). Residues 1 to 32 (MSETPAQSSIKQERISYTPPESPVASHRSSTP) are disordered. Lysine 11 is subject to N6-acetyllysine; alternate. Lysine 11 is covalently cross-linked (Glycyl lysine isopeptide (Lys-Gly) (interchain with G-Cter in SUMO2); alternate). Threonine 18 is subject to Phosphothreonine. Phosphoserine is present on serine 22. The PNT domain occupies 41 to 125 (ALRMEEDSIH…ELLQHILKQR (85 aa)). Residues 157–210 (NCVQRTPRTPAESVHHNPPTIELLHRPRSPITTNHRPSPDPEQQRPQRSPLDNM) are disordered. Threonine 165 carries the post-translational modification Phosphothreonine. Serine 215, serine 240, and serine 251 each carry phosphoserine. A Glycyl lysine isopeptide (Lys-Gly) (interchain with G-Cter in SUMO2) cross-link involves residue lysine 284. Residue lysine 298 is modified to N6-acetyllysine; alternate. Lysine 298 participates in a covalent cross-link: Glycyl lysine isopeptide (Lys-Gly) (interchain with G-Cter in SUMO2); alternate. Phosphoserine is present on serine 319. The ETS DNA-binding region spans 335–416 (RLLWDYVYQL…PGQRLLFRFM (82 aa)). Glycyl lysine isopeptide (Lys-Gly) (interchain with G-Cter in SUMO2) cross-links involve residues lysine 399 and lysine 417. Residues 440–485 (EQTYQEDEPTIASPVGWPRGNLPTGTAGGVMEAGELGVAVKEETRE) form a disordered region.

This sequence belongs to the ETS family. As to quaternary structure, can form homodimers or heterodimers with TEL2 or FLI1. Interacts with L3MBTL1 and HDAC9.

The protein resides in the nucleus. Its function is as follows. Transcriptional repressor; binds to the DNA sequence 5'-CCGGAAGT-3'. Plays a role in hematopoiesis and malignant transformation. The chain is Transcription factor ETV6 (Etv6) from Mus musculus (Mouse).